The chain runs to 66 residues: Large ribosomal subunit protein bL33c (66 aa).

It belongs to the bacterial ribosomal protein bL33 family.

Its subcellular location is the plastid. The protein resides in the chloroplast. The polypeptide is Large ribosomal subunit protein bL33c (rpl33) (Arabidopsis thaliana (Mouse-ear cress)).